The sequence spans 439 residues: Protein dumpy-20 (439 aa).

The interval 93-116 (GTLSDPSLHGSNSSSSTSDVGSSV) is disordered. Low complexity predominate over residues 96-116 (SDPSLHGSNSSSSTSDVGSSV). 2 consecutive BED-type zinc fingers follow at residues 135–184 (PTEN…YQKV) and 349–398 (KTEH…YNDV). 8 residues coordinate Zn(2+): Cys-154, Cys-157, His-172, His-177, Cys-368, Cys-371, His-386, and His-391.

In terms of biological role, involved in cuticle function and is essential for normal morphological development. The chain is Protein dumpy-20 (dpy-20) from Caenorhabditis briggsae.